Consider the following 206-residue polypeptide: Ribosomal RNA large subunit methyltransferase E (206 aa).

S-adenosyl-L-methionine contacts are provided by G61, W63, D81, D97, and D122. Catalysis depends on K162, which acts as the Proton acceptor.

Belongs to the class I-like SAM-binding methyltransferase superfamily. RNA methyltransferase RlmE family.

The protein resides in the cytoplasm. It catalyses the reaction uridine(2552) in 23S rRNA + S-adenosyl-L-methionine = 2'-O-methyluridine(2552) in 23S rRNA + S-adenosyl-L-homocysteine + H(+). Specifically methylates the uridine in position 2552 of 23S rRNA at the 2'-O position of the ribose in the fully assembled 50S ribosomal subunit. This Neisseria gonorrhoeae (strain NCCP11945) protein is Ribosomal RNA large subunit methyltransferase E.